The following is a 23-amino-acid chain: Glutamine synthetase (23 aa).

It belongs to the glutamine synthetase family. Oligomer of 12 subunits arranged in the form of two hexagons. Mg(2+) serves as cofactor.

The protein resides in the cytoplasm. It catalyses the reaction L-glutamate + NH4(+) + ATP = L-glutamine + ADP + phosphate + H(+). The activity of this enzyme could be controlled by adenylation under conditions of abundant glutamine. Involved in nitrogen metabolism via ammonium assimilation. Catalyzes the ATP-dependent biosynthesis of glutamine from glutamate and ammonia. This is Glutamine synthetase from Phormidium lapideum.